Reading from the N-terminus, the 274-residue chain is Large ribosomal subunit protein uL2cz/uL2cy (274 aa).

Disordered regions lie at residues 1-22 (MAIH…DSQV) and 225-274 (PVDH…RRSK).

Belongs to the universal ribosomal protein uL2 family. Part of the 50S ribosomal subunit.

It localises to the plastid. Its subcellular location is the chloroplast. The sequence is that of Large ribosomal subunit protein uL2cz/uL2cy (rpl2-A) from Arabis hirsuta (Hairy rock-cress).